We begin with the raw amino-acid sequence, 75 residues long: Cytochrome c oxidase assembly factor 5 (75 aa).

The region spanning Q28–R66 is the CHCH domain. Positions C31 to C42 match the Cx10C motif motif. 2 cysteine pairs are disulfide-bonded: C31-C58 and C42-C48. The Cx9C motif motif lies at C48 to C58.

This sequence belongs to the PET191 family.

Involved in an early step of the mitochondrial complex IV assembly process. The protein is Cytochrome c oxidase assembly factor 5 (coa5) of Xenopus tropicalis (Western clawed frog).